The sequence spans 495 residues: UPF0371 protein cgR_2887 (495 aa).

It belongs to the UPF0371 family.

The polypeptide is UPF0371 protein cgR_2887 (Corynebacterium glutamicum (strain R)).